The chain runs to 420 residues: Na(+)/H(+) antiporter NhaA (420 aa).

A run of 11 helical transmembrane segments spans residues 4-24, 70-90, 104-124, 132-152, 165-185, 192-212, 233-250, 299-319, 323-343, 361-381, and 395-415; these read VWNF…IALI, DLLM…AVIL, LVAT…IAYF, AVAN…YLVG, FLLL…AIFY, PAWL…ANWL, LSFW…YGFM, VEII…SAMG, WLVL…FGWL, LVVI…VASV, and GALF…LTQV.

Belongs to the NhaA Na(+)/H(+) (TC 2.A.33) antiporter family.

It is found in the cell inner membrane. The catalysed reaction is Na(+)(in) + 2 H(+)(out) = Na(+)(out) + 2 H(+)(in). Functionally, na(+)/H(+) antiporter that extrudes sodium in exchange for external protons. This chain is Na(+)/H(+) antiporter NhaA, found in Jannaschia sp. (strain CCS1).